We begin with the raw amino-acid sequence, 755 residues long: Serine/threonine-protein kinase GA29083 (755 aa).

The segment covering 18 to 52 has biased composition (low complexity); that stretch reads QASASGSGTPKKTAASSAAAQNSKQLLDQLSQQQK. A disordered region spans residues 18-128; sequence QASASGSGTP…GSANTNGSAS (111 aa). 2 stretches are compositionally biased toward basic and acidic residues: residues 53-66 and 74-84; these read AQEE…RDCD and EPEKDLDELRD. The span at 87-99 shows a compositional bias: polar residues; the sequence is GSLTGSGSVGKSN. Low complexity predominate over residues 100–128; the sequence is GSLSGASSTTSAPAGTSTPGSANTNGSAS. 2 consecutive Doublecortin domains span residues 157–243 and 314–397; these read HRIK…VDYN and RIVT…VEDF. The Protein kinase domain occupies 484-742; the sequence is YTLSQIIGDG…SEDILDHYWT (259 aa). Residues 490–498 and lysine 513 each bind ATP; that span reads IGDGNFAIV. Aspartate 605 acts as the Proton acceptor in catalysis.

The protein belongs to the protein kinase superfamily. CAMK Ser/Thr protein kinase family. CaMK subfamily.

It catalyses the reaction L-seryl-[protein] + ATP = O-phospho-L-seryl-[protein] + ADP + H(+). It carries out the reaction L-threonyl-[protein] + ATP = O-phospho-L-threonyl-[protein] + ADP + H(+). This Drosophila pseudoobscura pseudoobscura (Fruit fly) protein is Serine/threonine-protein kinase GA29083.